Consider the following 308-residue polypeptide: D-alanine--D-alanine ligase (308 aa).

The ATP-grasp domain maps to K102–E302. P128–T183 contributes to the ATP binding site. Mg(2+) is bound by residues D252, E269, and N271.

The protein belongs to the D-alanine--D-alanine ligase family. It depends on Mg(2+) as a cofactor. Mn(2+) is required as a cofactor.

The protein resides in the cytoplasm. The catalysed reaction is 2 D-alanine + ATP = D-alanyl-D-alanine + ADP + phosphate + H(+). The protein operates within cell wall biogenesis; peptidoglycan biosynthesis. Its function is as follows. Cell wall formation. This is D-alanine--D-alanine ligase from Rhizobium meliloti (strain 1021) (Ensifer meliloti).